The chain runs to 253 residues: Ubiquinone biosynthesis O-methyltransferase (253 aa).

S-adenosyl-L-methionine is bound by residues Arg41, Gly72, Asp93, and Leu136.

Belongs to the methyltransferase superfamily. UbiG/COQ3 family.

It catalyses the reaction a 3-demethylubiquinol + S-adenosyl-L-methionine = a ubiquinol + S-adenosyl-L-homocysteine + H(+). It carries out the reaction a 3-(all-trans-polyprenyl)benzene-1,2-diol + S-adenosyl-L-methionine = a 2-methoxy-6-(all-trans-polyprenyl)phenol + S-adenosyl-L-homocysteine + H(+). The protein operates within cofactor biosynthesis; ubiquinone biosynthesis. In terms of biological role, O-methyltransferase that catalyzes the 2 O-methylation steps in the ubiquinone biosynthetic pathway. This is Ubiquinone biosynthesis O-methyltransferase from Azorhizobium caulinodans (strain ATCC 43989 / DSM 5975 / JCM 20966 / LMG 6465 / NBRC 14845 / NCIMB 13405 / ORS 571).